The primary structure comprises 341 residues: Cell division protein FtsX (341 aa).

The tract at residues 1–34 (MSTTRTPKVSERVAPKPADPQPAKKKRGEDDDGP) is disordered. Over 1–65 (MSTTRTPKVS…RRLGKQPIGS (65 aa)) the chain is Cytoplasmic. The chain crosses the membrane as a helical span at residues 66 to 86 (FFTCLVMAVALSMPMGLSLLL). At 87–212 (KNIEQLGGSW…LAAILKLGDR (126 aa)) the chain is on the periplasmic side. Residues 213-233 (FVFGLAVMLISALLLVIGNTI) traverse the membrane as a helical segment. The Cytoplasmic portion of the chain corresponds to 234–263 (RLHIENRRIEIEVIKLVGGTDAYVRRPFLY). A helical membrane pass occupies residues 264-284 (MGALYGLGAGLLAWGILAFGL). At 285–311 (NWLNEAVVGLSGLYGSDFALGGVPASD) the chain is on the periplasmic side. A helical membrane pass occupies residues 312-332 (GLSLLIGAVLLGYIGAWIAVA). Topologically, residues 333–341 (RHLNELAPR) are cytoplasmic.

This sequence belongs to the ABC-4 integral membrane protein family. FtsX subfamily. In terms of assembly, forms a membrane-associated complex with FtsE.

It localises to the cell inner membrane. Its function is as follows. Part of the ABC transporter FtsEX involved in cellular division. The polypeptide is Cell division protein FtsX (Pseudomonas putida (Arthrobacter siderocapsulatus)).